A 206-amino-acid polypeptide reads, in one-letter code: ATP phosphoribosyltransferase (206 aa).

Belongs to the ATP phosphoribosyltransferase family. Short subfamily. Heteromultimer composed of HisG and HisZ subunits.

It localises to the cytoplasm. It carries out the reaction 1-(5-phospho-beta-D-ribosyl)-ATP + diphosphate = 5-phospho-alpha-D-ribose 1-diphosphate + ATP. It functions in the pathway amino-acid biosynthesis; L-histidine biosynthesis; L-histidine from 5-phospho-alpha-D-ribose 1-diphosphate: step 1/9. Catalyzes the condensation of ATP and 5-phosphoribose 1-diphosphate to form N'-(5'-phosphoribosyl)-ATP (PR-ATP). Has a crucial role in the pathway because the rate of histidine biosynthesis seems to be controlled primarily by regulation of HisG enzymatic activity. This Campylobacter curvus (strain 525.92) protein is ATP phosphoribosyltransferase.